The sequence spans 227 residues: Esterase OVCA2 (227 aa).

Residues 44–68 (GPHPVPDPPGPEGARSDFGSCPPEE) are disordered. Catalysis depends on charge relay system residues S119, D179, and H206.

This sequence belongs to the LovG family. In terms of processing, proteolytically degraded in response to RA and 4HPR treatment in a time- and dose-dependent manner in the promyelocytic leukemia cell line HL-60. In terms of tissue distribution, ubiquitously expressed.

The catalysed reaction is a carboxylic ester + H2O = an alcohol + a carboxylate + H(+). In terms of biological role, exhibits ester hydrolase activity with a strong preference for long-chain alkyl ester substrates and high selectivity against a variety of short, branched, and substituted esters. Is able to hydrolyze ester bonds within a wide range of p-nitrophenyl derivatives (C2-C14) in vitro, with a strong preference toward substrates of &gt;8 carbons. In Homo sapiens (Human), this protein is Esterase OVCA2.